The following is a 372-amino-acid chain: Pyrimidine monooxygenase RutA (372 aa).

FMN contacts are provided by residues 57–58 (IK), Asn-123, Glu-132, 148–149 (RY), and Ser-198.

It belongs to the NtaA/SnaA/DszA monooxygenase family. RutA subfamily.

It carries out the reaction uracil + FMNH2 + NADH + O2 = (Z)-3-ureidoacrylate + FMN + NAD(+) + H2O + H(+). The enzyme catalyses thymine + FMNH2 + NADH + O2 = (Z)-2-methylureidoacrylate + FMN + NAD(+) + H2O + H(+). Catalyzes the pyrimidine ring opening between N-3 and C-4 by an unusual flavin hydroperoxide-catalyzed mechanism, adding oxygen atoms in the process to yield ureidoacrylate peracid, that immediately reacts with FMN forming ureidoacrylate and FMN-N(5)-oxide. The FMN-N(5)-oxide reacts spontaneously with NADH to produce FMN. Requires the flavin reductase RutF to regenerate FMN in vivo. The protein is Pyrimidine monooxygenase RutA of Methylorubrum extorquens (strain PA1) (Methylobacterium extorquens).